Here is a 483-residue protein sequence, read N- to C-terminus: 2-methylcitrate dehydratase (483 aa).

It belongs to the PrpD family. As to quaternary structure, monomer.

It catalyses the reaction (2S,3S)-2-methylcitrate = 2-methyl-cis-aconitate + H2O. The catalysed reaction is citrate = D-threo-isocitrate. It participates in organic acid metabolism; propanoate degradation. Its pathway is carbohydrate metabolism; tricarboxylic acid cycle; isocitrate from oxaloacetate: step 2/2. In terms of biological role, involved in the catabolism of short chain fatty acids (SCFA) via the tricarboxylic acid (TCA)(acetyl degradation route) and via the 2-methylcitrate cycle I (propionate degradation route). Catalyzes the dehydration of 2-methylcitrate (2-MC) to yield the cis isomer of 2-methyl-aconitate. It is also able to catalyze the dehydration of citrate and the hydration of cis-aconitate at a lower rate. Due to its broad substrate specificity, it seems to be responsible for the residual aconitase activity of the acnAB-null mutant. This Escherichia coli (strain K12) protein is 2-methylcitrate dehydratase.